A 219-amino-acid polypeptide reads, in one-letter code: MEHLANENSDSDIRYSFLSTLDHLPCELIRSLRLMQTIDLFKNEEDEPGMERACRDLLLVATYINDLVDDQIHFLKQHKKELEIQKSVTKNFNSSLENIKSKLTLEEPGAYKEPKLLLKINLKKAKSRERKESITSPTIGINQGDVTEGNNNQEEVYCFCRNVSYGPMVACDNPACPFEWFHYGCVGLKQAPKGKWYCSKDCKEIANQRSKSKRQKRRK.

Residues Glu-155–Glu-204 form a PHD-type; degenerate zinc finger. The Zn(2+) site is built by Cys-158, Cys-160, Cys-171, Cys-176, His-182, Cys-185, Cys-198, and Cys-202.

Belongs to the ING family. Component of the NuA3 histone acetyltransferase (HAT) complex. The NuA3 HAT complex has 2 functionally distinct forms that participate in transcription. The NuA3a HAT complex is composed of at least NTO1, SAS3, TAF14, YNG1 and EAF6. The NuA3b HAT complex contains an additional subunit, PDP3. Interacts with H3K4me3 and to a lesser extent with H3K4me2.

Its subcellular location is the nucleus. Functionally, histone-binding component of the NuA3a histone acetyltransferase complex. Targets the NuA3a HAT complex via histone H3K4me3 to facilitate transcription initiation at promoter regions. SAS3 then acetylates H3K14, leading to transcription initiation at a subset of genes. YNG1 is required for the HAT activity of NuA3 but not for its integrity. Mediates the interaction of SAS3 with nucleosomes. The protein is Protein YNG1 (YNG1) of Saccharomyces cerevisiae (strain ATCC 204508 / S288c) (Baker's yeast).